The primary structure comprises 385 residues: Transcription factor TGAL3 (385 aa).

The disordered stretch occupies residues 62–113 (LHALVGGGDGGDDAGEQRGADSSAVSKERRGDQKMQRRLAQNREAARKSRMR). A compositionally biased stretch (basic and acidic residues) spans 87 to 96 (SKERRGDQKM). The 45-residue stretch at 93-137 (DQKMQRRLAQNREAARKSRMRKKAYIQQLESSRSKLMHLEQELQR) folds into the bZIP domain. The basic motif stretch occupies residues 95 to 115 (KMQRRLAQNREAARKSRMRKK). Residues 121–135 (LESSRSKLMHLEQEL) form a leucine-zipper region. The 221-residue stretch at 162 to 382 (TLAFDLEYAR…RALSSLWLAR (221 aa)) folds into the DOG1 domain.

This sequence belongs to the bZIP family. In terms of assembly, interacts with NPR1/NH1, NPR2/NH2 and NPR3/NH3.

The protein resides in the nucleus. Transcriptional regulator involved in defense response. This chain is Transcription factor TGAL3, found in Oryza sativa subsp. japonica (Rice).